The sequence spans 601 residues: Potassium-transporting ATPase potassium-binding subunit (601 aa).

Helical transmembrane passes span 6–26, 65–85, 136–156, 179–199, 283–303, 313–333, 367–387, 397–417, 419–439, 458–478, 524–544, and 566–586; these read IMLL…LGLF, SYAI…YAVQ, ALTG…FALI, LYIL…QGVI, FSNF…CFTF, GWAV…IVMT, FGIS…CGAV, MGGF…GGVG, GLYG…LMIG, SIAI…AVLV, MLAI…LAIA, and LFVA…YVPA.

The protein belongs to the KdpA family. As to quaternary structure, the system is composed of three essential subunits: KdpA, KdpB and KdpC.

The protein resides in the cell inner membrane. Its function is as follows. Part of the high-affinity ATP-driven potassium transport (or Kdp) system, which catalyzes the hydrolysis of ATP coupled with the electrogenic transport of potassium into the cytoplasm. This subunit binds the periplasmic potassium ions and delivers the ions to the membrane domain of KdpB through an intramembrane tunnel. This Herminiimonas arsenicoxydans protein is Potassium-transporting ATPase potassium-binding subunit.